The primary structure comprises 248 residues: Probable transcriptional regulatory protein BARBAKC583_0163 (248 aa).

It belongs to the TACO1 family.

The protein resides in the cytoplasm. The chain is Probable transcriptional regulatory protein BARBAKC583_0163 from Bartonella bacilliformis (strain ATCC 35685 / KC583 / Herrer 020/F12,63).